We begin with the raw amino-acid sequence, 683 residues long: Amphiphysin (683 aa).

2 coiled-coil regions span residues 10 to 83 (AKNV…SLHE) and 144 to 191 (DYDS…QEEL). The BAR domain occupies 24–240 (VLQKLGKADE…MTKLGDQHAD (217 aa)). Disordered regions lie at residues 244 to 311 (SIQG…KVTP), 421 to 443 (AETEQALPTEPQAEEPPTTAAAP), and 455 to 599 (EPKE…ASLS). At Ser252 the chain carries Phosphoserine. Residue Thr260 is modified to Phosphothreonine. Residues 261–274 (PSPPEEASPLPSPT) are compositionally biased toward pro residues. Residues Ser262, Ser268, Ser272, and Ser276 each carry the phosphoserine modification. Thr280 bears the Phosphothreonine mark. Composition is skewed to low complexity over residues 424–443 (EQALPTEPQAEEPPTTAAAP) and 468–477 (AGETVGTEGS). Ser496 carries the phosphoserine modification. The span at 539–559 (SNHEGEEHQETTTGTETREAT) shows a compositional bias: basic and acidic residues. Residues 585-596 (AATPAPAGAVDA) show a composition bias toward low complexity. The SH3 domain maps to 610–683 (GFLYKVETLH…FPENFTRHLE (74 aa)). Ser626 is modified (phosphoserine).

Heterodimer with BIN1. Binds SH3GLB1. Interacts with REPS1 and SGIP1. Binds AP2A2. Interacts with AP2B1. Interacts with DNM1 and SYNJ1.

The protein localises to the cytoplasmic vesicle. It localises to the secretory vesicle. It is found in the synaptic vesicle membrane. The protein resides in the cytoplasm. Its subcellular location is the cytoskeleton. Functionally, may participate in mechanisms of regulated exocytosis in synapses and certain endocrine cell types. May control the properties of the membrane associated cytoskeleton. The polypeptide is Amphiphysin (Amph) (Rattus norvegicus (Rat)).